Here is a 281-residue protein sequence, read N- to C-terminus: Polyamine aminopropyltransferase (281 aa).

The 235-residue stretch at 2–236 (DLWLKEGQIS…GYWSFTIGSK (235 aa)) folds into the PABS domain. S-methyl-5'-thioadenosine is bound at residue Q31. H62 and D86 together coordinate spermidine. S-methyl-5'-thioadenosine-binding positions include E106 and 138-139 (DG). D156 serves as the catalytic Proton acceptor. 156-159 (DSTD) is a binding site for spermidine.

Belongs to the spermidine/spermine synthase family. In terms of assembly, homodimer or homotetramer.

Its subcellular location is the cytoplasm. The enzyme catalyses S-adenosyl 3-(methylsulfanyl)propylamine + putrescine = S-methyl-5'-thioadenosine + spermidine + H(+). The protein operates within amine and polyamine biosynthesis; spermidine biosynthesis; spermidine from putrescine: step 1/1. Functionally, catalyzes the irreversible transfer of a propylamine group from the amino donor S-adenosylmethioninamine (decarboxy-AdoMet) to putrescine (1,4-diaminobutane) to yield spermidine. The polypeptide is Polyamine aminopropyltransferase (Clostridium tetani (strain Massachusetts / E88)).